Here is a 298-residue protein sequence, read N- to C-terminus: MKVTVISGSSSEVVELPSNAGLTDLKKVYKPRVDIHRKSFKILRSGGDKNDKSAYITLDAKRALTEQGVKDGSEVVYKDLGPQVGYRTVFVVEYAGPLAIMLAYAARPSFIYGSSIVKEYCYTQKLYIALFCAHFIKRELETFFVHKFSHPTMPRRNIIKNCVYYWTFALGIGYALCSPYYTEPASPTLVNASAVAMVIFELLNFAVHVQLSGMRKGDGDATRPVPKGILFSLVSCPNYLFEILSWVAFSLGTSMLTSWGFTFAGLVQMAEWAVKKHKNYIKTDPSVRNKKAMLPFLL.

Helical transmembrane passes span 162–182, 189–209, 229–249, and 254–274; these read CVYY…PYYT, LVNA…AVHV, ILFS…WVAF, and SMLT…EWAV.

The protein belongs to the steroid 5-alpha reductase family.

It is found in the membrane. It functions in the pathway lipid metabolism; fatty acid biosynthesis. Functionally, involved in the synthesis of fatty acids. This is Putative enoyl-CoA reductase from Trypanosoma brucei brucei (strain 927/4 GUTat10.1).